The chain runs to 184 residues: dCTP deaminase (184 aa).

DCTP is bound by residues 107–112, 131–133, glutamine 152, tyrosine 166, and glutamine 176; these read KSTYAR and TLE. The active-site Proton donor/acceptor is the glutamate 133.

It belongs to the dCTP deaminase family. In terms of assembly, homotrimer.

The enzyme catalyses dCTP + H2O + H(+) = dUTP + NH4(+). Its pathway is pyrimidine metabolism; dUMP biosynthesis; dUMP from dCTP (dUTP route): step 1/2. Functionally, catalyzes the deamination of dCTP to dUTP. The sequence is that of dCTP deaminase from Rhodospirillum centenum (strain ATCC 51521 / SW).